The sequence spans 198 residues: MASGPSVFLLNVSGQIESAEFPEFDDLYCKYSFVYGHDWAPTSGIEEGISQITSKSQGGKQTLVWNFPVEITFKSTNPYGWPQIVISVYGPDVFGNDVVRGYGAVHLPFTPGRHTRTIPMFVPESSSRLQRFTSWFMGRRPEFTDPKVVAQGEGREVTRVRSQGCVTVSFNVVTKDLKKLGYNTGSSDFPSAQLMPQP.

The C2 B9-type domain maps to 8–126 (FLLNVSGQIE…TIPMFVPESS (119 aa)).

It belongs to the B9D family. As to quaternary structure, part of the tectonic-like complex (also named B9 complex).

The protein resides in the cytoplasm. It is found in the cytoskeleton. It localises to the cilium basal body. Its function is as follows. Component of the tectonic-like complex, a complex localized at the transition zone of primary cilia and acting as a barrier that prevents diffusion of transmembrane proteins between the cilia and plasma membranes. Required for ciliogenesis and sonic hedgehog/SHH signaling. The polypeptide is B9 domain-containing protein 1 (b9d1) (Xenopus laevis (African clawed frog)).